Here is a 379-residue protein sequence, read N- to C-terminus: Queuine tRNA-ribosyltransferase (379 aa).

The Proton acceptor role is filled by Asp-94. Residues 94–98 (DSGGF), Asp-148, Gln-191, and Gly-218 contribute to the substrate site. The interval 249–255 (GVGSPDS) is RNA binding. The active-site Nucleophile is the Asp-268. The interval 273-277 (TRIGR) is RNA binding; important for wobble base 34 recognition. Zn(2+) contacts are provided by Cys-306, Cys-308, Cys-311, and His-337.

It belongs to the queuine tRNA-ribosyltransferase family. Homodimer. Within each dimer, one monomer is responsible for RNA recognition and catalysis, while the other monomer binds to the replacement base PreQ1. Zn(2+) is required as a cofactor.

It carries out the reaction 7-aminomethyl-7-carbaguanine + guanosine(34) in tRNA = 7-aminomethyl-7-carbaguanosine(34) in tRNA + guanine. Its pathway is tRNA modification; tRNA-queuosine biosynthesis. Its function is as follows. Catalyzes the base-exchange of a guanine (G) residue with the queuine precursor 7-aminomethyl-7-deazaguanine (PreQ1) at position 34 (anticodon wobble position) in tRNAs with GU(N) anticodons (tRNA-Asp, -Asn, -His and -Tyr). Catalysis occurs through a double-displacement mechanism. The nucleophile active site attacks the C1' of nucleotide 34 to detach the guanine base from the RNA, forming a covalent enzyme-RNA intermediate. The proton acceptor active site deprotonates the incoming PreQ1, allowing a nucleophilic attack on the C1' of the ribose to form the product. After dissociation, two additional enzymatic reactions on the tRNA convert PreQ1 to queuine (Q), resulting in the hypermodified nucleoside queuosine (7-(((4,5-cis-dihydroxy-2-cyclopenten-1-yl)amino)methyl)-7-deazaguanosine). The polypeptide is Queuine tRNA-ribosyltransferase (Anoxybacillus flavithermus (strain DSM 21510 / WK1)).